A 143-amino-acid polypeptide reads, in one-letter code: Insertion element IS2 uncharacterized 16.4 kDa protein (143 aa).

The sequence is that of Insertion element IS2 uncharacterized 16.4 kDa protein from Escherichia coli.